A 203-amino-acid chain; its full sequence is dTTP/UTP pyrophosphatase (203 aa).

Aspartate 70 (proton acceptor) is an active-site residue.

It belongs to the Maf family. YhdE subfamily. A divalent metal cation is required as a cofactor.

The protein resides in the cytoplasm. The enzyme catalyses dTTP + H2O = dTMP + diphosphate + H(+). It catalyses the reaction UTP + H2O = UMP + diphosphate + H(+). Functionally, nucleoside triphosphate pyrophosphatase that hydrolyzes dTTP and UTP. May have a dual role in cell division arrest and in preventing the incorporation of modified nucleotides into cellular nucleic acids. The chain is dTTP/UTP pyrophosphatase (maf-1) from Pseudomonas putida (strain ATCC 47054 / DSM 6125 / CFBP 8728 / NCIMB 11950 / KT2440).